The primary structure comprises 155 residues: Ribosome maturation factor RimP (155 aa).

The protein belongs to the RimP family.

It localises to the cytoplasm. Its function is as follows. Required for maturation of 30S ribosomal subunits. This chain is Ribosome maturation factor RimP, found in Agathobacter rectalis (strain ATCC 33656 / DSM 3377 / JCM 17463 / KCTC 5835 / VPI 0990) (Eubacterium rectale).